We begin with the raw amino-acid sequence, 459 residues long: Protein YTP1 (459 aa).

The Extracellular portion of the chain corresponds to 1 to 6; the sequence is MTAANK. Residues 7 to 27 traverse the membrane as a helical segment; that stretch reads NIVFGFSRSISAILLICFFFE. Residues 28-59 lie on the Cytoplasmic side of the membrane; sequence KVCGDMEHDMGMDDTSGYTRPEIVQAGSKSFH. The helical transmembrane segment at 60–80 threads the bilayer; sequence WLCTLGFLLLLPSVVTCLSFA. Residues 81–82 are Extracellular-facing; it reads GR. Residues 83–103 traverse the membrane as a helical segment; sequence IYSATLLQCTCAVYAFLEAAV. The Cytoplasmic portion of the chain corresponds to 104–122; sequence LRFQDNDGVENRTSRGTAW. Residues 123-143 traverse the membrane as a helical segment; sequence FLVGLTWITLFFGGLAGGTGF. Residues 144 to 170 are Extracellular-facing; it reads LVKSKRLQTFISNAGEKRLSYIHRGLS. Residues 171 to 191 form a helical membrane-spanning segment; it reads FLTVLTGWVKVCLAPVALFGF. The Cytoplasmic segment spans residues 192–205; that stretch reads CREAHTGQCIAHGI. A helical membrane pass occupies residues 206 to 226; sequence MGSAFVLYGFIYVLVLVIPWI. Residues 227-266 are Extracellular-facing; sequence RSAQTSYSQDYVDSWVMCIWGVVNTFTEHRWGREGWSVHD. Residues 267 to 287 traverse the membrane as a helical segment; the sequence is YQHTFMGIIWWTGGILGIFLS. The Cytoplasmic portion of the chain corresponds to 288 to 295; that stretch reads RNGRRTFV. Residues 296-316 traverse the membrane as a helical segment; sequence PSLIIIFTGWAMSEHAQHLII. Topologically, residues 317–322 are extracellular; it reads STKVHN. The helical transmembrane segment at 323–343 threads the bilayer; sequence MFGLVLMCGGALRIIEISFLL. The Cytoplasmic segment spans residues 344 to 351; sequence RDKRTLDK. The helical transmembrane segment at 352–372 threads the bilayer; the sequence is IHSFQYLAPFCLVCSGLLFMG. Residues 373-389 are Extracellular-facing; the sequence is ANEEQLILVLRLGGDHS. Residues 390-410 form a helical membrane-spanning segment; the sequence is AYVLIIVSGAFLVYFWMIACL. Residues 411-459 lie on the Cytoplasmic side of the membrane; it reads EFYLYLLEKGKQGFLPKSYELEEENNNVSFELDNISNEDVDEDTTPFNV.

Its subcellular location is the membrane. The polypeptide is Protein YTP1 (YTP1) (Saccharomyces cerevisiae (strain ATCC 204508 / S288c) (Baker's yeast)).